We begin with the raw amino-acid sequence, 76 residues long: VpAmp1.0 (76 aa).

A signal peptide spans 1–22 (MKLINLVPVFFVLIIVVDYCHS). Ile-41 is modified (isoleucine amide). Positions 42-76 (GKRSVESQRYVDLNRRDLEQDLQELQDFLDQISEH) are excised as a propeptide.

This sequence belongs to the non-disulfide-bridged peptide (NDBP) superfamily. Short antimicrobial peptide (group 4) family. In terms of tissue distribution, expressed by the venom gland.

Its subcellular location is the secreted. It localises to the target cell membrane. Functionally, antimicrobial peptide with potent activity against Gram-positive bacteria S.aureus (MIC=2.5 uM) and S.agalactiaea (MIC=2.5 uM), and Gram-negative bacteria E.coli (MIC=24 uM) and P.aeruginosa (MIC=2.5 uM), as well as against yeasts Candida albicans (MIC=6.25 uM) and C.glabrata (MIC&gt;50 uM). Also elicits high hemolysis on human erythrocytes (HC(50)=9.2 uM). The protein is VpAmp1.0 of Mesomexovis punctatus (Scorpion).